A 78-amino-acid chain; its full sequence is Acyl carrier protein (78 aa).

In terms of domain architecture, Carrier spans 2-77 (SDIAERVKKI…DAIKFLEKNA (76 aa)). The residue at position 37 (Ser-37) is an O-(pantetheine 4'-phosphoryl)serine.

This sequence belongs to the acyl carrier protein (ACP) family. 4'-phosphopantetheine is transferred from CoA to a specific serine of apo-ACP by AcpS. This modification is essential for activity because fatty acids are bound in thioester linkage to the sulfhydryl of the prosthetic group.

The protein resides in the cytoplasm. Its pathway is lipid metabolism; fatty acid biosynthesis. Carrier of the growing fatty acid chain in fatty acid biosynthesis. The sequence is that of Acyl carrier protein from Azorhizobium caulinodans (strain ATCC 43989 / DSM 5975 / JCM 20966 / LMG 6465 / NBRC 14845 / NCIMB 13405 / ORS 571).